We begin with the raw amino-acid sequence, 446 residues long: Tubulin beta-8 chain (446 aa).

Residues Q11, E69, S138, G142, T143, G144, N204, and N226 each coordinate GTP. E69 is a binding site for Mg(2+). The tract at residues 426 to 446 (QDATAEDDYDEDDDAAAADEA) is disordered. A compositionally biased stretch (acidic residues) spans 429-446 (TAEDDYDEDDDAAAADEA).

The protein belongs to the tubulin family. Dimer of alpha and beta chains. A typical microtubule is a hollow water-filled tube with an outer diameter of 25 nm and an inner diameter of 15 nM. Alpha-beta heterodimers associate head-to-tail to form protofilaments running lengthwise along the microtubule wall with the beta-tubulin subunit facing the microtubule plus end conferring a structural polarity. Microtubules usually have 13 protofilaments but different protofilament numbers can be found in some organisms and specialized cells. Mg(2+) serves as cofactor. In terms of tissue distribution, expressed in anthers.

It is found in the cytoplasm. Its subcellular location is the cytoskeleton. In terms of biological role, tubulin is the major constituent of microtubules, a cylinder consisting of laterally associated linear protofilaments composed of alpha- and beta-tubulin heterodimers. Microtubules grow by the addition of GTP-tubulin dimers to the microtubule end, where a stabilizing cap forms. Below the cap, tubulin dimers are in GDP-bound state, owing to GTPase activity of alpha-tubulin. The protein is Tubulin beta-8 chain (TUBB8) of Oryza sativa subsp. japonica (Rice).